Consider the following 245-residue polypeptide: Polynucleotide 3'-phosphatase (245 aa).

It belongs to the DNA 3' phosphatase family.

The protein localises to the nucleus. It catalyses the reaction a 3'end (2'-deoxyribonucleotide 3'-phosphate)-DNA + H2O = a 3'-end 2'-deoxyribonucleotide-DNA + phosphate. In terms of biological role, dephosphorylate DNA's 3'-phosphate termini. Has a role in the repair of breaks in single-stranded DNA. This is Polynucleotide 3'-phosphatase (TPP1) from Saccharomyces mikatae (Yeast).